Reading from the N-terminus, the 159-residue chain is uncharacterized protein (159 aa).

The segment at 9–36 is disordered; sequence VTSGNKEKKKKRSSAGLTGHAPPAADSS.

This is an uncharacterized protein from Caenorhabditis elegans.